Here is a 512-residue protein sequence, read N- to C-terminus: Putative B3 domain-containing protein REM4 (512 aa).

Positions 11-103 (NKAFFIIDLS…VFHVSPFGRS (93 aa)) form a DNA-binding region, TF-B3 1. Positions 111–145 (SSSTSDDDDDERTVFDDDEDDDVGDDDDNSISEDD) are disordered. Positions 115–145 (SDDDDDERTVFDDDEDDDVGDDDDNSISEDD) are enriched in acidic residues. 2 DNA-binding regions (TF-B3) span residues 169 to 265 (YLVA…LCPN) and 307 to 403 (ILTF…CSKV). The tract at residues 408–465 (SSDGHKTADRKPRMTDQAPLAEEQTDNRVEKRAQVTEEGGPSRSTRADPGNLQQKQPC) is disordered. Basic and acidic residues-rich tracts occupy residues 410 to 421 (DGHKTADRKPRM) and 432 to 442 (TDNRVEKRAQV).

The protein resides in the nucleus. This chain is Putative B3 domain-containing protein REM4 (REM4), found in Arabidopsis thaliana (Mouse-ear cress).